The primary structure comprises 714 residues: Fatty acid oxidation complex subunit alpha (714 aa).

Residues 1–190 (MEMASAFTLN…KLGLVDDVVP (190 aa)) form an enoyl-CoA hydratase region. The interval 306–714 (APLNSVGILG…FWKTTATDLQ (409 aa)) is 3-hydroxyacyl-CoA dehydrogenase.

The protein in the N-terminal section; belongs to the enoyl-CoA hydratase/isomerase family. It in the central section; belongs to the 3-hydroxyacyl-CoA dehydrogenase family. Heterotetramer of two alpha chains (FadJ) and two beta chains (FadI).

It is found in the cytoplasm. It catalyses the reaction a (3S)-3-hydroxyacyl-CoA = a (2E)-enoyl-CoA + H2O. It carries out the reaction a 4-saturated-(3S)-3-hydroxyacyl-CoA = a (3E)-enoyl-CoA + H2O. The enzyme catalyses a (3S)-3-hydroxyacyl-CoA + NAD(+) = a 3-oxoacyl-CoA + NADH + H(+). The catalysed reaction is (3S)-3-hydroxybutanoyl-CoA = (3R)-3-hydroxybutanoyl-CoA. Its pathway is lipid metabolism; fatty acid beta-oxidation. Functionally, catalyzes the formation of a hydroxyacyl-CoA by addition of water on enoyl-CoA. Also exhibits 3-hydroxyacyl-CoA epimerase and 3-hydroxyacyl-CoA dehydrogenase activities. The protein is Fatty acid oxidation complex subunit alpha of Shigella flexneri.